Here is a 160-residue protein sequence, read N- to C-terminus: MAPK regulated corepressor interacting protein 2 (160 aa).

M1 carries the post-translational modification N-acetylmethionine. The segment at 1 to 64 is disordered; that stretch reads MYTITKGPSK…GPWPLSSPGP (64 aa). R35 is modified (omega-N-methylarginine). Residues 37 to 61 show a composition bias toward pro residues; that stretch reads PAPPTSQPPRAQPFAQPPGPWPLSS. S61 bears the Phosphoserine mark. An Omega-N-methylarginine modification is found at R65. S82 carries the phosphoserine modification.

It belongs to the MCRIP family. In terms of assembly, interacts with DDX6. Interacts with MCRIP1.

It localises to the cytoplasm. The protein resides in the stress granule. Its subcellular location is the nucleus. The protein is MAPK regulated corepressor interacting protein 2 (MCRIP2) of Homo sapiens (Human).